The following is a 364-amino-acid chain: Phosphoserine aminotransferase (364 aa).

Arg40 lines the L-glutamate pocket. Pyridoxal 5'-phosphate is bound by residues 74–75 (GT), Trp100, Thr149, Asp170, and Gln193. Lys194 carries the N6-(pyridoxal phosphate)lysine modification. 235 to 236 (NT) lines the pyridoxal 5'-phosphate pocket.

This sequence belongs to the class-V pyridoxal-phosphate-dependent aminotransferase family. SerC subfamily. Homodimer. Pyridoxal 5'-phosphate serves as cofactor. In terms of tissue distribution, expressed in ovary and head.

The catalysed reaction is O-phospho-L-serine + 2-oxoglutarate = 3-phosphooxypyruvate + L-glutamate. The enzyme catalyses 4-(phosphooxy)-L-threonine + 2-oxoglutarate = (R)-3-hydroxy-2-oxo-4-phosphooxybutanoate + L-glutamate. The protein operates within amino-acid biosynthesis; L-serine biosynthesis; L-serine from 3-phospho-D-glycerate: step 2/3. It participates in cofactor biosynthesis; pyridoxine 5'-phosphate biosynthesis; pyridoxine 5'-phosphate from D-erythrose 4-phosphate: step 3/5. In terms of biological role, catalyzes the reversible conversion of 3-phosphohydroxypyruvate to phosphoserine and of 3-hydroxy-2-oxo-4-phosphonooxybutanoate to phosphohydroxythreonine. In Drosophila melanogaster (Fruit fly), this protein is Phosphoserine aminotransferase.